The chain runs to 216 residues: Vesicle-associated membrane protein 7A (216 aa).

At 1–189 (MSQTDILYAC…KRKLWWQNKK (189 aa)) the chain is on the cytoplasmic side. The region spanning 6 to 112 (ILYACVSYKG…ATYDPFIRVL (107 aa)) is the Longin domain. One can recognise a v-SNARE coiled-coil homology domain in the interval 126–186 (KMNLVMDQVS…VALKRKLWWQ (61 aa)). The chain crosses the membrane as a helical; Anchor for type IV membrane protein span at residues 190 to 210 (LAIAIGLVVCILIAVITLALL). The Vesicular portion of the chain corresponds to 211–216 (KYFKVI).

It belongs to the synaptobrevin family. Component of the SNARE complex composed of syn7A, syn8A, vamp7A and vti1A.

It localises to the cytoplasmic vesicle. It is found in the secretory vesicle membrane. The protein localises to the golgi apparatus. The protein resides in the trans-Golgi network membrane. Its subcellular location is the late endosome membrane. It localises to the lysosome membrane. It is found in the endoplasmic reticulum membrane. The protein localises to the phagosome membrane. In terms of biological role, involved in the targeting and/or fusion of transport vesicles to their target membrane during transport of proteins from the early endosome to the lysosome. Required for heterotypic fusion of late endosomes with lysosomes and homotypic lysosomal fusion. Required for calcium regulated lysosomal exocytosis. This is Vesicle-associated membrane protein 7A from Dictyostelium discoideum (Social amoeba).